The sequence spans 3295 residues: Toxin CdiA (3295 aa).

A two-partner system transport domain (TPS) region spans residues 33–366; it reads PSSGVGHTQR…GKGNTQLTTA (334 aa). The chain crosses the membrane as a helical span at residues 55–75; that stretch reads LLIALGCISLSAQAAIVADGS. The interval 353–1574 is FHA-1; it reads GVLYGKGNTQ…LLVYAKTLTN (1222 aa). Residues 1165–1185 form a disordered region; that stretch reads PPSSIPPSSTQSSSTQASASP. Positions 1575 to 1796 are receptor binding domain (RBD); that stretch reads RRQILTATTD…LKTDKGDYAP (222 aa). Positions 1797-1977 are YP domain; sequence GPEAALSLAN…GVKPGDLRAN (181 aa). The segment at 1806–1831 is disordered; it reads NISPPSSLDATGPRGVPPPSDDLNRT. The interval 1998 to 2035 is periplasmic FHA-1 repeat (pFR); the sequence is GAISASNNLQISMAKDITLNNRCGLLQAGNHLQLSTLN. The FHA-2 stretch occupies residues 2022-2676; it reads LLQAGNHLQL…DRDNYDAKQS (655 aa). Disordered stretches follow at residues 2260–2292 and 2823–2847; these read TSQTEQHDEQRNHTGTKKGLLSSTTTRSEEGRS and QQNVDDLSRDTGNANGSIGPIFDKE. The span at 2823 to 2838 shows a compositional bias: polar residues; the sequence is QQNVDDLSRDTGNANG. The VENN CT cleavage motif motif lies at 3073 to 3076; the sequence is VENN. Residues 3073-3295 form a CT domain region; that stretch reads VENNLLGGNE…QKKDAMEDSK (223 aa). The tract at residues 3276-3295 is disordered; the sequence is SSEFGSSLIQQKKDAMEDSK. Residues 3286–3295 show a composition bias toward basic and acidic residues; that stretch reads QKKDAMEDSK.

The protein in the N-terminal section; belongs to the CdiA toxin family. As to quaternary structure, probably interacts with cognate immunity protein CdiI.

Its subcellular location is the membrane. The protein resides in the target cell. It is found in the target cell cytoplasm. In terms of biological role, toxic component of a toxin-immunity protein module, which functions as a cellular contact-dependent growth inhibition (CDI) system. CDI modules allow bacteria to communicate with and inhibit the growth of closely related neighboring bacteria in a contact-dependent fashion. CDI is neutralized by its cognate immunity protein CdiI, but not by non-cognate CdiI from other bacteria. Its function is as follows. The CdiA protein is thought to be exported from the cell through the central lumen of CdiB, the other half of its two-partner system (TPS). The TPS domain probably remains associated with CdiB while the FHA-1 domain forms an extended filament with the receptor-binding domain (RBD) at its extremity; in the secretion arrested state the C-terminus of the RBD and YP domains form a hairpin-like structure as the FHA-2, PT and CT domains are periplasmic. The YP domain is probably responsible for this arrest at the point where it re-enters the host cell periplasm. Upon binding to a target cell outer membrane receptor a signal is transmitted to activate secretion. The filament elongates slightly, the rest of CdiA is secreted and the FHA-2 domain becomes stably associated with the target cell's outer membrane where it facilitates entry of the toxic CT domain into the target cell periplasm. From there the toxic CT domain is cleaved and gains access to the target cell cytoplasm via an inner membrane protein. This chain is Toxin CdiA, found in Yersinia pestis.